Consider the following 410-residue polypeptide: Multidrug resistance protein MdtM (410 aa).

Topologically, residues 1–11 (MPRFFARHAAT) are cytoplasmic. A helical membrane pass occupies residues 12 to 32 (LFFPMALILYDFAAYLSTDLI). Over 33–48 (QPGIINVVRDFNADVS) the chain is Periplasmic. A helical transmembrane segment spans residues 49–69 (LAPAAVSLYLAGGMALQWLLG). Residues 70-78 (PLSDRIGRK) are Cytoplasmic-facing. A helical membrane pass occupies residues 79–99 (PVLITGALIFTLACAATMFTT). Residues 100-103 (SMTQ) are Periplasmic-facing. A helical transmembrane segment spans residues 104–124 (FLIARAIQGTSICFIATVGYV). Topologically, residues 125–140 (TVQEAFGQTKGIKLMA) are cytoplasmic. A helical membrane pass occupies residues 141–161 (IITSIVLIAPIIGPLSGAALM). Residues 162-167 (HFVHWK) are Periplasmic-facing. A helical membrane pass occupies residues 168–188 (VLFAIIAVMGFISFVGLLLAM). Residues 189-216 (PETVKRGAVPFSAKSVLRDFRNVFCNRL) are Cytoplasmic-facing. Residues 217–237 (FLFGAATISLSYIPMMSWVAV) form a helical membrane-spanning segment. Residues 238-251 (SPVILIDAGGLTTS) are Periplasmic-facing. A helical membrane pass occupies residues 252-272 (QFAWTQVPVFGAVIVANAIVA). Residues 273 to 282 (RFVKDPTEPR) lie on the Cytoplasmic side of the membrane. The chain crosses the membrane as a helical span at residues 283–303 (FIWRAVPIQLVGLALLIIGNL). Over 304–307 (LSPH) the chain is Periplasmic. Residues 308 to 328 (VWLWSVLGTSLYAFGIGLIFP) form a helical membrane-spanning segment. Over 329–348 (TLFRFTLFSNNLPKGTVSAS) the chain is Cytoplasmic. The chain crosses the membrane as a helical span at residues 349 to 369 (LNMVILMVMSVSVEIGRWLWF). Topologically, residues 370–373 (NGGR) are periplasmic. A helical transmembrane segment spans residues 374–394 (LPFHLLAVVAGVIVVFTLAGL). The Cytoplasmic portion of the chain corresponds to 395–410 (LNRVRQHQAAELAEEQ).

It belongs to the major facilitator superfamily.

The protein resides in the cell inner membrane. Proton-dependent efflux pump. Confers resistance to a broad spectrum of chemically unrelated substrates. This chain is Multidrug resistance protein MdtM (mdtM), found in Escherichia coli O157:H7.